A 488-amino-acid chain; its full sequence is Gamma-aminobutyric acid receptor subunit beta-4 (488 aa).

Residues 1–25 (MWTFQADRLSGIVSALAALCVACCA) form the signal peptide. The Extracellular portion of the chain corresponds to 26–244 (QSPSTGNISV…SFRIKRNIGY (219 aa)). 4 N-linked (GlcNAc...) asparagine glycosylation sites follow: N32, N104, N173, and N195. A disulfide bridge links C160 with C174. The next 3 membrane-spanning stretches (helical) occupy residues 245–266 (FILQ…SFWI), 271–292 (SAAR…NTHL), and 304–326 (AIDV…YAFV). Residues 327 to 465 (NYIFFGRGPR…DLTDVSTIDK (139 aa)) lie on the Cytoplasmic side of the membrane. Residues 466–487 (WSRIIFPITFGFFNLVYWLYYV) form a helical membrane-spanning segment.

The protein belongs to the ligand-gated ion channel (TC 1.A.9) family. Gamma-aminobutyric acid receptor (TC 1.A.9.5) subfamily. GABRB4 sub-subfamily. In terms of assembly, generally pentameric. There are five types of GABA(A) receptor chains: alpha, beta, gamma, delta, and rho.

The protein localises to the postsynaptic cell membrane. The protein resides in the cell membrane. In terms of biological role, GABA, the major inhibitory neurotransmitter in the vertebrate brain, mediates neuronal inhibition by binding to the GABA/benzodiazepine receptor and opening an integral chloride channel. The polypeptide is Gamma-aminobutyric acid receptor subunit beta-4 (GABRB4) (Gallus gallus (Chicken)).